The sequence spans 196 residues: Pyridoxine/pyridoxamine 5'-phosphate oxidase (196 aa).

Residues 44-49, 59-60, Arg65, Lys66, and Gln88 each bind FMN; these read RTVLLK and YT. Lys49 provides a ligand contact to substrate. Substrate-binding residues include Tyr106, Arg110, and Ser114. Residues 123-124 and Trp169 each bind FMN; that span reads QS. 175-177 lines the substrate pocket; it reads RLH. Residue Arg179 participates in FMN binding.

Belongs to the pyridoxamine 5'-phosphate oxidase family. As to quaternary structure, homodimer. Requires FMN as cofactor.

It carries out the reaction pyridoxamine 5'-phosphate + O2 + H2O = pyridoxal 5'-phosphate + H2O2 + NH4(+). It catalyses the reaction pyridoxine 5'-phosphate + O2 = pyridoxal 5'-phosphate + H2O2. It participates in cofactor metabolism; pyridoxal 5'-phosphate salvage; pyridoxal 5'-phosphate from pyridoxamine 5'-phosphate: step 1/1. Its pathway is cofactor metabolism; pyridoxal 5'-phosphate salvage; pyridoxal 5'-phosphate from pyridoxine 5'-phosphate: step 1/1. Functionally, catalyzes the oxidation of either pyridoxine 5'-phosphate (PNP) or pyridoxamine 5'-phosphate (PMP) into pyridoxal 5'-phosphate (PLP). This is Pyridoxine/pyridoxamine 5'-phosphate oxidase from Alkalilimnicola ehrlichii (strain ATCC BAA-1101 / DSM 17681 / MLHE-1).